The primary structure comprises 158 residues: Transcriptional regulator MraZ (158 aa).

2 consecutive SpoVT-AbrB domains span residues 5 to 52 (IYET…TFSS) and 91 to 134 (AVEC…SQAE).

This sequence belongs to the MraZ family. In terms of assembly, forms oligomers.

The protein resides in the cytoplasm. The protein localises to the nucleoid. In Geobacter sulfurreducens (strain ATCC 51573 / DSM 12127 / PCA), this protein is Transcriptional regulator MraZ.